Reading from the N-terminus, the 564-residue chain is Probable diguanylate cyclase DgcQ (564 aa).

2 helical membrane passes run 20 to 40 and 360 to 380; these read LGPG…STLL and IALT…WYVI. Residues 428–563 enclose the GGDEF domain; that stretch reads HPFSVIQVDL…GRNRVFASDN (136 aa). Asp436 lines the Mg(2+) pocket. Substrate contacts are provided by Asn444, His449, and Asp453. Glu479 is a binding site for Mg(2+). Glu479 serves as the catalytic Proton acceptor.

In terms of assembly, homodimer. The cofactor is Mg(2+).

Its subcellular location is the cell inner membrane. It catalyses the reaction 2 GTP = 3',3'-c-di-GMP + 2 diphosphate. It functions in the pathway glycan metabolism; bacterial cellulose biosynthesis. It participates in purine metabolism; 3',5'-cyclic di-GMP biosynthesis. Its function is as follows. Catalyzes the synthesis of cyclic-di-GMP (c-di-GMP) via the condensation of 2 GTP molecules. Cyclic-di-GMP is a second messenger which controls cell surface-associated traits in bacteria. Involved in the regulation of cellulose production. The sequence is that of Probable diguanylate cyclase DgcQ from Escherichia coli (strain K12).